We begin with the raw amino-acid sequence, 273 residues long: Ribosomal RNA small subunit methyltransferase A (273 aa).

The S-adenosyl-L-methionine site is built by N18, L20, G45, E66, D91, and N113.

Belongs to the class I-like SAM-binding methyltransferase superfamily. rRNA adenine N(6)-methyltransferase family. RsmA subfamily.

The protein localises to the cytoplasm. It catalyses the reaction adenosine(1518)/adenosine(1519) in 16S rRNA + 4 S-adenosyl-L-methionine = N(6)-dimethyladenosine(1518)/N(6)-dimethyladenosine(1519) in 16S rRNA + 4 S-adenosyl-L-homocysteine + 4 H(+). Functionally, specifically dimethylates two adjacent adenosines (A1518 and A1519) in the loop of a conserved hairpin near the 3'-end of 16S rRNA in the 30S particle. May play a critical role in biogenesis of 30S subunits. This is Ribosomal RNA small subunit methyltransferase A from Escherichia coli O81 (strain ED1a).